The primary structure comprises 653 residues: Large subunit GTPase 1 homolog (653 aa).

The segment at 1–47 (MGKKRGTGLGRSLQRQRGSERRGASSWLHASEVVGESGPERRSAVEQ) is disordered. The CP-type G domain occupies 155 to 439 (WRQLWRVIER…LCDCPGLVMP (285 aa)). Residue 203–206 (NKAD) coordinates GTP. The span at 248–275 (ADSVADDLSDSEEESSSQEEDVTAEDSA) shows a compositional bias: acidic residues. The disordered stretch occupies residues 248–323 (ADSVADDLSD…TCSEDEGGDK (76 aa)). Residues 276–291 (ESTSTGSALQTENQCL) are compositionally biased toward polar residues. Positions 293-320 (SDDDSSDEYEDCEDEEEDDWQTCSEDEG) are enriched in acidic residues. GTP-binding positions include 388–395 (GYPNVGKS) and 432–435 (DCPG). The segment at 621–653 (APSAGSVVGKPWKKHGNRNKKEKVRRITKHLEN) is disordered. A compositionally biased stretch (basic residues) spans 631–653 (PWKKHGNRNKKEKVRRITKHLEN).

Belongs to the TRAFAC class YlqF/YawG GTPase family. LSG1 subfamily.

Its subcellular location is the cytoplasm. The protein resides in the endoplasmic reticulum. It is found in the nucleus. It localises to the cajal body. It catalyses the reaction GTP + H2O = GDP + phosphate + H(+). GTPase required for the XPO1/CRM1-mediated nuclear export of the 60S ribosomal subunit. Probably acts by mediating the release of NMD3 from the 60S ribosomal subunit after export into the cytoplasm. In terms of biological role, functions as a GTPase. May act by mediating the release of NMD3 from the 60S ribosomal subunit after export into the cytoplasm during the 60S ribosomal subunit maturation. This is Large subunit GTPase 1 homolog from Gallus gallus (Chicken).